Reading from the N-terminus, the 1468-residue chain is Centrosomal protein of 290 kDa (1468 aa).

7 coiled-coil regions span residues 1–25, 52–121, 172–292, 318–528, 559–592, 627–688, and 736–1441; these read ERQLRKENGKQKNELMAMEAEVGEK, SLSE…IEQA, KMYE…DEKA, VASK…EAQK, RIILETQATCRSLEEKLREKESALRLAEENILSR, HTLK…QADN, and IKLK…SEQF. Residues 1060 to 1468 are self-association (with itself or N-terminus); it reads TTGLTVDQVM…QENPVNFPIY (409 aa). The interval 1130–1152 is disordered; that stretch reads LSKDAYSRPSTSGIDSDDHYQRE.

As to quaternary structure, part of the tectonic-like complex (also named B9 complex). Interacts with ATF4 via its N-terminal region. Associates with the BBSome complex, interacting (via N-terminus) with BBS4. Interacts with IQCB1/NPHP5; IQCB1 and CEP290/NPHP6 are proposed to form a functional NPHP5-6 module localized to the centrosome. Interacts with NPHP4; the interaction likely requires additional interactors. Interacts with ZNF423, FAM161A, CEP162, CEP162, CEP131, TALPID3, CCDC13, CC2D2A, RPGRIP1. Can self-associate (homo- or heteromeric). Interacts with CCP110; required for suppressing cilia formation. Interacts with RPGR. Associates (via C-terminus) with microtubules; association to microtubule is reduced in response to cellular stress, such as ultraviolet light (UV) radiation or heat shock, in a process that requires p38 MAP kinase signaling. Interacts with FAM161A. Interacts with PCM1. Interacts with CCDC66. Interacts with ARMC9 and CSPP1. Post-translationally, ubiquitinated. May undergo monoubiquitination; monoubiquitination is inhibited in response to cellular stress, such as ultraviolet light (UV) radiation or heat shock, but does not cause its displacement from centriolar satellites.

The protein resides in the cytoplasm. Its subcellular location is the cytoskeleton. The protein localises to the microtubule organizing center. It localises to the centrosome. It is found in the centriolar satellite. The protein resides in the nucleus. Its subcellular location is the cell projection. The protein localises to the cilium. It localises to the cilium basal body. It is found in the centriole. The protein resides in the cytoplasmic vesicle. Its function is as follows. Involved in early and late steps in cilia formation. Its association with CCP110 is required for inhibition of primary cilia formation by CCP110. May play a role in early ciliogenesis in the disappearance of centriolar satellites and in the transition of primary ciliar vesicles (PCVs) to capped ciliary vesicles (CCVs). Required for the centrosomal recruitment of RAB8A and for the targeting of centriole satellite proteins to centrosomes such as of PCM1. Required for the correct localization of ciliary and phototransduction proteins in retinal photoreceptor cells; may play a role in ciliary transport processes. Required for efficient recruitment of RAB8A to primary cilium. In the ciliary transition zone is part of the tectonic-like complex which is required for tissue-specific ciliogenesis and may regulate ciliary membrane composition. Involved in regulation of the BBSome complex integrity, specifically for presence of BBS2, BBS5 and BBS8/TTC8 in the complex, and in ciliary targeting of selected BBSome cargos. May play a role in controlling entry of the BBSome complex to cilia possibly implicating IQCB1/NPHP5. Activates ATF4-mediated transcription. The polypeptide is Centrosomal protein of 290 kDa (CEP290) (Bos taurus (Bovine)).